The following is a 157-amino-acid chain: Cyclic pyranopterin monophosphate synthase (157 aa).

Residues 74 to 76 (MCH) and 112 to 113 (ME) contribute to the substrate site. The active site involves Asp-127.

This sequence belongs to the MoaC family. Homohexamer; trimer of dimers.

It catalyses the reaction (8S)-3',8-cyclo-7,8-dihydroguanosine 5'-triphosphate = cyclic pyranopterin phosphate + diphosphate. The protein operates within cofactor biosynthesis; molybdopterin biosynthesis. Functionally, catalyzes the conversion of (8S)-3',8-cyclo-7,8-dihydroguanosine 5'-triphosphate to cyclic pyranopterin monophosphate (cPMP). In Campylobacter jejuni subsp. jejuni serotype O:6 (strain 81116 / NCTC 11828), this protein is Cyclic pyranopterin monophosphate synthase.